We begin with the raw amino-acid sequence, 407 residues long: Dual-specificity RNA methyltransferase RlmN (407 aa).

Glu136 serves as the catalytic Proton acceptor. The Radical SAM core domain occupies Arg144–Arg378. Cys151 and Cys389 form a disulfide bridge. Positions 158, 162, and 165 each coordinate [4Fe-4S] cluster. S-adenosyl-L-methionine is bound by residues Gly215–Glu216, Ser247, Ser269–His271, and Asn346. Residue Cys389 is the S-methylcysteine intermediate of the active site.

This sequence belongs to the radical SAM superfamily. RlmN family. [4Fe-4S] cluster serves as cofactor.

The protein localises to the cytoplasm. It catalyses the reaction adenosine(2503) in 23S rRNA + 2 reduced [2Fe-2S]-[ferredoxin] + 2 S-adenosyl-L-methionine = 2-methyladenosine(2503) in 23S rRNA + 5'-deoxyadenosine + L-methionine + 2 oxidized [2Fe-2S]-[ferredoxin] + S-adenosyl-L-homocysteine. It carries out the reaction adenosine(37) in tRNA + 2 reduced [2Fe-2S]-[ferredoxin] + 2 S-adenosyl-L-methionine = 2-methyladenosine(37) in tRNA + 5'-deoxyadenosine + L-methionine + 2 oxidized [2Fe-2S]-[ferredoxin] + S-adenosyl-L-homocysteine. Functionally, specifically methylates position 2 of adenine 2503 in 23S rRNA and position 2 of adenine 37 in tRNAs. m2A2503 modification seems to play a crucial role in the proofreading step occurring at the peptidyl transferase center and thus would serve to optimize ribosomal fidelity. The protein is Dual-specificity RNA methyltransferase RlmN of Gluconobacter oxydans (strain 621H) (Gluconobacter suboxydans).